A 357-amino-acid chain; its full sequence is MSQSGKNGLTYSDAGVDIDAGNLLVEKIKPAVRSTRRPGADGEIGGFGGLFDLKAAGFTDPVLVAANDGVGTKLKIAIDADYHDTVGIDLVAMCVNDLVVQGAEPLFFLDYFATGKLDPDQGAAIVGGIAAGCREAGCALIGGETAEMPGMYSDGDYDLAGFAVGAAERGQLLPSGDIAEGDVILGLASSGVHSNGFSLVRKIVDLSGLAWDAPAPFAEGKALGEALLTPTRIYVKPLLKAIRETHAIKALAHITGGGFPENIPRVLPKHLAAEIDLTAVKVPPVFSWLAKTGGVEAKEMLRTFNCGIGMIAVVAAENVDTVKAALEAEGESIVTLGRMIARDEGAAGTVYKGTLDL.

Belongs to the AIR synthase family.

The protein resides in the cytoplasm. The enzyme catalyses 2-formamido-N(1)-(5-O-phospho-beta-D-ribosyl)acetamidine + ATP = 5-amino-1-(5-phospho-beta-D-ribosyl)imidazole + ADP + phosphate + H(+). It functions in the pathway purine metabolism; IMP biosynthesis via de novo pathway; 5-amino-1-(5-phospho-D-ribosyl)imidazole from N(2)-formyl-N(1)-(5-phospho-D-ribosyl)glycinamide: step 2/2. In Rhizobium rhizogenes (strain K84 / ATCC BAA-868) (Agrobacterium radiobacter), this protein is Phosphoribosylformylglycinamidine cyclo-ligase.